The sequence spans 306 residues: Small ribosomal subunit biogenesis GTPase RsgA (306 aa).

Positions 77 to 236 (KNELKRPNVA…IVDTPGFSKL (160 aa)) constitute a CP-type G domain. GTP-binding positions include 126 to 129 (SKID) and 179 to 187 (GQTGVGKST). The Zn(2+) site is built by Cys-260, Cys-266, His-268, and Cys-274.

It belongs to the TRAFAC class YlqF/YawG GTPase family. RsgA subfamily. In terms of assembly, monomer. Associates with 30S ribosomal subunit, binds 16S rRNA. The cofactor is Zn(2+).

Its subcellular location is the cytoplasm. Its function is as follows. One of several proteins that assist in the late maturation steps of the functional core of the 30S ribosomal subunit. Helps release RbfA from mature subunits. May play a role in the assembly of ribosomal proteins into the subunit. Circularly permuted GTPase that catalyzes slow GTP hydrolysis, GTPase activity is stimulated by the 30S ribosomal subunit. The polypeptide is Small ribosomal subunit biogenesis GTPase RsgA (Onion yellows phytoplasma (strain OY-M)).